We begin with the raw amino-acid sequence, 163 residues long: MFSNKKYIGLINKKEGLKKKIDDYSILIIGILIGTNILSLIINIIGEINKPICYQNNDKIFYCPKDWVGYNNVCYYFSNDNGNNYTTADNKCKQLNNSTLANNLTDLLNLTSFLNLTKLYHHHSHYWVNYSLNNNYSVPLIDSKYNLNRKKSHYTDLLFICSK.

The Cytoplasmic portion of the chain corresponds to 1–26 (MFSNKKYIGLINKKEGLKKKIDDYSI). A helical transmembrane segment spans residues 27–47 (LIIGILIGTNILSLIINIIGE). At 48–163 (INKPICYQNN…YTDLLFICSK (116 aa)) the chain is on the extracellular side. Residues cysteine 63 and cysteine 74 are joined by a disulfide bond. The tract at residues 63 to 162 (CPKDWVGYNN…HYTDLLFICS (100 aa)) is lectin-like. 8 N-linked (GlcNAc...) asparagine; by host glycosylation sites follow: asparagine 84, asparagine 96, asparagine 97, asparagine 103, asparagine 109, asparagine 115, asparagine 129, and asparagine 135. Cysteine 92 and cysteine 161 are oxidised to a cystine.

The protein belongs to the asfivirus lectin-like protein family. In terms of assembly, homodimer.

The protein resides in the host endoplasmic reticulum membrane. Functionally, down-regulates MHC-I expression by impairing the appropriate configuration or presentation into the plasma membrane of the latter. Participates in viral hemadsorption, which may help viral spread. Reduces the transactivating activity of host TP53, thus inhibiting apoptosis. Non-essential for virus growth in swine macrophage cell cultures. This African swine fever virus (isolate Warthog/Namibia/Wart80/1980) (ASFV) protein is Lectin-like protein EP153R.